The primary structure comprises 221 residues: uncharacterized protein (221 aa).

The CUE domain occupies 20-63 (DFDRAMLDFQAMFPSLSNSHIEYVLRKYDGDVSATINELLYDNT). A disordered region spans residues 131-194 (EEKKKKSCSD…GPYIGEGEVK (64 aa)). Positions 156 to 166 (KNSKNSKISVN) are enriched in low complexity. Over residues 169-183 (KKLEPRRRSDEDRVP) the composition is skewed to basic and acidic residues.

This is an uncharacterized protein from Caenorhabditis elegans.